Here is a 29-residue protein sequence, read N- to C-terminus: Cyclotide psyleio B (29 aa).

Positions 1–29 form a cross-link, cyclopeptide (Gly-Arg); sequence GDLPICGETCFGGTCNTPGCVCAWPVCNR. Cystine bridges form between C6-C20, C10-C22, and C15-C27.

This is a cyclic peptide.

Probably participates in a plant defense mechanism. The chain is Cyclotide psyleio B from Psychotria brachyceras.